The following is a 428-amino-acid chain: Trigger factor (428 aa).

A PPIase FKBP-type domain is found at 163 to 248 (GDTAVIDFEG…VHEVKAKQLP (86 aa)).

It belongs to the FKBP-type PPIase family. Tig subfamily.

The protein localises to the cytoplasm. The enzyme catalyses [protein]-peptidylproline (omega=180) = [protein]-peptidylproline (omega=0). In terms of biological role, involved in protein export. Acts as a chaperone by maintaining the newly synthesized protein in an open conformation. Functions as a peptidyl-prolyl cis-trans isomerase. The chain is Trigger factor from Geobacillus thermodenitrificans (strain NG80-2).